We begin with the raw amino-acid sequence, 54 residues long: Large ribosomal subunit protein bL33 (54 aa).

This sequence belongs to the bacterial ribosomal protein bL33 family.

In Elusimicrobium minutum (strain Pei191), this protein is Large ribosomal subunit protein bL33.